The chain runs to 104 residues: Small ribosomal subunit protein uS10 (104 aa).

The protein belongs to the universal ribosomal protein uS10 family. In terms of assembly, part of the 30S ribosomal subunit.

In terms of biological role, involved in the binding of tRNA to the ribosomes. The chain is Small ribosomal subunit protein uS10 from Alkaliphilus metalliredigens (strain QYMF).